A 149-amino-acid polypeptide reads, in one-letter code: Ribonuclease H (149 aa).

In terms of domain architecture, RNase H type-1 spans 1–142; it reads MSTITIHTDG…ADELAREGLA (142 aa). Mg(2+) contacts are provided by Asp9, Glu47, Asp70, and Asp134. Residues 124 to 149 form a disordered region; the sequence is HAGDPGNERADELAREGLAEARGRQP. Residues 129–149 show a composition bias toward basic and acidic residues; that stretch reads GNERADELAREGLAEARGRQP.

The protein belongs to the RNase H family. Monomer. It depends on Mg(2+) as a cofactor.

It localises to the cytoplasm. The catalysed reaction is Endonucleolytic cleavage to 5'-phosphomonoester.. Functionally, endonuclease that specifically degrades the RNA of RNA-DNA hybrids. This is Ribonuclease H from Maricaulis maris (strain MCS10) (Caulobacter maris).